The primary structure comprises 645 residues: Transcription factor AN6788 (645 aa).

The disordered stretch occupies residues 1-21 (MPQKAQPQPRESPFKPARQQP). A DNA-binding region (zn(2)-C6 fungal-type) is located at residues 25-52 (CEECRKRKARCDRAKPQCGSCMMTGRVC). The segment covering 113-131 (PDFEPNSHPRHSQSHDRRQ) has biased composition (basic and acidic residues). The disordered stretch occupies residues 113 to 170 (PDFEPNSHPRHSQSHDRRQQSGPDSSPDTQHELPFLQSPPAARDADSAERALLPSPVS).

The protein resides in the nucleus. Transcription factors AN6788 and AN6790 act in tandem to regulate the expression of the non-reducing polyketide synthase pkfA from the aspernidine A biosynthesis cluster. They do not control the expression of the other genes involved in aspernidine A biosynthesis, nor do they regulate the expression of the highly reducing polyketide synthase AN6791 and the esterase AN6793 with which they are predicted to form a secondary metabolite biosynthesis cluster. The sequence is that of Transcription factor AN6788 from Emericella nidulans (strain FGSC A4 / ATCC 38163 / CBS 112.46 / NRRL 194 / M139) (Aspergillus nidulans).